A 620-amino-acid polypeptide reads, in one-letter code: uncharacterized protein (620 aa).

A run of 4 helical transmembrane segments spans residues 66-86 (LLNF…NQII), 238-258 (FFDA…NLLW), 546-566 (LGII…VWTI), and 584-604 (IIFI…ILVF).

It is found in the cell membrane. This is an uncharacterized protein from Mycoplasma genitalium (strain ATCC 33530 / DSM 19775 / NCTC 10195 / G37) (Mycoplasmoides genitalium).